The primary structure comprises 612 residues: Dihydroxy-acid dehydratase (612 aa).

Residue aspartate 81 coordinates Mg(2+). [2Fe-2S] cluster is bound at residue cysteine 122. Mg(2+)-binding residues include aspartate 123 and lysine 124. Lysine 124 is modified (N6-carboxylysine). Position 193 (cysteine 193) interacts with [2Fe-2S] cluster. Glutamate 489 is a Mg(2+) binding site. The active-site Proton acceptor is serine 515.

This sequence belongs to the IlvD/Edd family. In terms of assembly, homodimer. The cofactor is [2Fe-2S] cluster. Requires Mg(2+) as cofactor.

The enzyme catalyses (2R)-2,3-dihydroxy-3-methylbutanoate = 3-methyl-2-oxobutanoate + H2O. It catalyses the reaction (2R,3R)-2,3-dihydroxy-3-methylpentanoate = (S)-3-methyl-2-oxopentanoate + H2O. The protein operates within amino-acid biosynthesis; L-isoleucine biosynthesis; L-isoleucine from 2-oxobutanoate: step 3/4. Its pathway is amino-acid biosynthesis; L-valine biosynthesis; L-valine from pyruvate: step 3/4. In terms of biological role, functions in the biosynthesis of branched-chain amino acids. Catalyzes the dehydration of (2R,3R)-2,3-dihydroxy-3-methylpentanoate (2,3-dihydroxy-3-methylvalerate) into 2-oxo-3-methylpentanoate (2-oxo-3-methylvalerate) and of (2R)-2,3-dihydroxy-3-methylbutanoate (2,3-dihydroxyisovalerate) into 2-oxo-3-methylbutanoate (2-oxoisovalerate), the penultimate precursor to L-isoleucine and L-valine, respectively. This chain is Dihydroxy-acid dehydratase, found in Pseudomonas aeruginosa (strain LESB58).